Reading from the N-terminus, the 355-residue chain is MSNNGIAAVVVDDSQFMRTVISDMLDDAGITVVATASNGESGVEAVRTHEPDVVTMDLKMPGMDGIEATGRIMDECPTPVLVLSAHADDGAELTFEAMDEGAVDFFKKPSGEVSVGIKQQQDELVEKVRSVAGADVSATEAAAERTTSTATSTTTSRSASEYVDKPTLVIGSSTGGPTVVEQLLSELPLDADLRILVVQHMPDGFTGRFAKRLDGASEYSVSEATGGERIGGGEALVAQGGYHLEVSGYGGGRLRVTLTEDEPVNNVRPAVDVTLQTAAEQVDGPLTAAILTGMGADGADGVESVSAAGGSVVAQDEETSAVFGMPQRAIETGVVDDVRPRNELADGVLDTIMRE.

The region spanning 7–123 (AAVVVDDSQF…SVGIKQQQDE (117 aa)) is the Response regulatory domain. Residue aspartate 57 is modified to 4-aspartylphosphate. The disordered stretch occupies residues 139 to 159 (TEAAAERTTSTATSTTTSRSA). Residues 161 to 355 (EYVDKPTLVI…DGVLDTIMRE (195 aa)) form the CheB-type methylesterase domain. Active-site residues include serine 173, histidine 200, and aspartate 297.

The protein belongs to the CheB family. Phosphorylated by CheA. Phosphorylation of the N-terminal regulatory domain activates the methylesterase activity.

The protein resides in the cytoplasm. It catalyses the reaction [protein]-L-glutamate 5-O-methyl ester + H2O = L-glutamyl-[protein] + methanol + H(+). The catalysed reaction is L-glutaminyl-[protein] + H2O = L-glutamyl-[protein] + NH4(+). Its function is as follows. Involved in chemotaxis. Part of a chemotaxis signal transduction system that modulates chemotaxis in response to various stimuli. Catalyzes the demethylation of specific methylglutamate residues introduced into the chemoreceptors (methyl-accepting chemotaxis proteins or MCP) by CheR. Also mediates the irreversible deamidation of specific glutamine residues to glutamic acid. This chain is Protein-glutamate methylesterase/protein-glutamine glutaminase, found in Natronomonas pharaonis (strain ATCC 35678 / DSM 2160 / CIP 103997 / JCM 8858 / NBRC 14720 / NCIMB 2260 / Gabara) (Halobacterium pharaonis).